A 386-amino-acid chain; its full sequence is Phosphoglycerate kinase (386 aa).

Substrate contacts are provided by residues 21 to 23, arginine 36, 59 to 62, arginine 113, and arginine 146; these read DLN and HLGR. Residues lysine 197, glutamate 314, and 340–343 contribute to the ATP site; that span reads GGDT.

The protein belongs to the phosphoglycerate kinase family. In terms of assembly, monomer.

The protein localises to the cytoplasm. It catalyses the reaction (2R)-3-phosphoglycerate + ATP = (2R)-3-phospho-glyceroyl phosphate + ADP. It functions in the pathway carbohydrate degradation; glycolysis; pyruvate from D-glyceraldehyde 3-phosphate: step 2/5. The polypeptide is Phosphoglycerate kinase (Marinobacter nauticus (strain ATCC 700491 / DSM 11845 / VT8) (Marinobacter aquaeolei)).